Consider the following 286-residue polypeptide: Probable protein S-acyltransferase 16 (286 aa).

A run of 2 helical transmembrane segments spans residues 11 to 31 (PVTV…FTFI) and 45 to 65 (NAAA…IAVF). The DHHC domain occupies 97–147 (RYCQKCSHFKPPRAHHCRVCKRCVLRMDHHCIWINNCVGHTNYKVFFVFVV). The S-palmitoyl cysteine intermediate role is filled by cysteine 127. The next 2 helical transmembrane spans lie at 141-161 (VFFV…VLLV) and 182-202 (IYVI…VLLG).

Belongs to the DHHC palmitoyltransferase family.

It is found in the golgi apparatus membrane. It catalyses the reaction L-cysteinyl-[protein] + hexadecanoyl-CoA = S-hexadecanoyl-L-cysteinyl-[protein] + CoA. In terms of biological role, palmitoyl acyltransferase. The sequence is that of Probable protein S-acyltransferase 16 (PAT16) from Arabidopsis thaliana (Mouse-ear cress).